A 210-amino-acid chain; its full sequence is Histidine biosynthesis bifunctional protein HisIE (210 aa).

A phosphoribosyl-AMP cyclohydrolase region spans residues 1 to 106; it reads MTKYKIDFSK…SCFNTEVPFS (106 aa). The tract at residues 107 to 210 is phosphoribosyl-ATP pyrophosphohydrolase; it reads VQTLAQTVQD…KGERQNIEQW (104 aa).

This sequence in the N-terminal section; belongs to the PRA-CH family. It in the C-terminal section; belongs to the PRA-PH family.

The protein localises to the cytoplasm. It carries out the reaction 1-(5-phospho-beta-D-ribosyl)-ATP + H2O = 1-(5-phospho-beta-D-ribosyl)-5'-AMP + diphosphate + H(+). The catalysed reaction is 1-(5-phospho-beta-D-ribosyl)-5'-AMP + H2O = 1-(5-phospho-beta-D-ribosyl)-5-[(5-phospho-beta-D-ribosylamino)methylideneamino]imidazole-4-carboxamide. It participates in amino-acid biosynthesis; L-histidine biosynthesis; L-histidine from 5-phospho-alpha-D-ribose 1-diphosphate: step 2/9. It functions in the pathway amino-acid biosynthesis; L-histidine biosynthesis; L-histidine from 5-phospho-alpha-D-ribose 1-diphosphate: step 3/9. In Staphylococcus aureus (strain Mu50 / ATCC 700699), this protein is Histidine biosynthesis bifunctional protein HisIE (hisI).